A 517-amino-acid polypeptide reads, in one-letter code: Probable bifunctional methylthioribulose-1-phosphate dehydratase/enolase-phosphatase E1 (517 aa).

A methylthioribulose-1-phosphate dehydratase region spans residues 1–242 (MACSGCSCEA…CIKLYQLGID (242 aa)). Cys114 serves as a coordination point for substrate. 2 residues coordinate Zn(2+): His132 and His134. The active-site Proton donor/acceptor; for methylthioribulose-1-phosphate dehydratase activity is Glu157. His207 provides a ligand contact to Zn(2+). The segment at 278-517 (VVLDIEGTTT…FRTIKSFSEI (240 aa)) is enolase-phosphatase E1. The Mg(2+) site is built by Asp281 and Glu283. Substrate is bound by residues 416–417 (SS) and Lys450. Asp476 serves as a coordination point for Mg(2+).

This sequence in the N-terminal section; belongs to the aldolase class II family. MtnB subfamily. It in the C-terminal section; belongs to the HAD-like hydrolase superfamily. MasA/MtnC family. Zn(2+) serves as cofactor. Requires Mg(2+) as cofactor.

It carries out the reaction 5-(methylsulfanyl)-D-ribulose 1-phosphate = 5-methylsulfanyl-2,3-dioxopentyl phosphate + H2O. It catalyses the reaction 5-methylsulfanyl-2,3-dioxopentyl phosphate + H2O = 1,2-dihydroxy-5-(methylsulfanyl)pent-1-en-3-one + phosphate. It functions in the pathway amino-acid biosynthesis; L-methionine biosynthesis via salvage pathway; L-methionine from S-methyl-5-thio-alpha-D-ribose 1-phosphate: step 2/6. The protein operates within amino-acid biosynthesis; L-methionine biosynthesis via salvage pathway; L-methionine from S-methyl-5-thio-alpha-D-ribose 1-phosphate: step 3/6. It participates in amino-acid biosynthesis; L-methionine biosynthesis via salvage pathway; L-methionine from S-methyl-5-thio-alpha-D-ribose 1-phosphate: step 4/6. The sequence is that of Probable bifunctional methylthioribulose-1-phosphate dehydratase/enolase-phosphatase E1 from Zea mays (Maize).